Consider the following 159-residue polypeptide: Ribosomal RNA large subunit methyltransferase H (159 aa).

The S-adenosyl-L-methionine site is built by Leu-76 and Gly-108.

It belongs to the RNA methyltransferase RlmH family. Homodimer.

The protein localises to the cytoplasm. The catalysed reaction is pseudouridine(1915) in 23S rRNA + S-adenosyl-L-methionine = N(3)-methylpseudouridine(1915) in 23S rRNA + S-adenosyl-L-homocysteine + H(+). Specifically methylates the pseudouridine at position 1915 (m3Psi1915) in 23S rRNA. This is Ribosomal RNA large subunit methyltransferase H from Lactiplantibacillus plantarum (strain ATCC BAA-793 / NCIMB 8826 / WCFS1) (Lactobacillus plantarum).